Here is a 528-residue protein sequence, read N- to C-terminus: Protein MGF 505-7R (528 aa).

ANK repeat units follow at residues 129–158, 261–290, and 292–322; these read ECDL…LLNV, HVNR…VPHK, and IERM…KVKN.

This sequence belongs to the asfivirus MGF 505 family. Interacts with host STING1. Interacts with host JAK1; this interaction leads to JAK1 degradation. Interacts with host JAK2; this interaction leads to JAK2 degradation. Interacts with host RELA; this interaction inhibits NF-kappa-B promoter activity.

Its subcellular location is the host cytoplasm. In terms of biological role, plays a role in virus cell tropism, and may be required for efficient virus replication in macrophages. Interferes with host NF-kappa-B promoter activity mediated by TLR8. Mechanistically, inhibits the phosphorylation and subsequent nuclear translocation of host NF-kappa-B RELA subunit downstream of TLR8. Promotes the expression of the autophagy-related protein host ULK1 to degrade host STING and inhibit the interferon response. Also inhibits JAK1- and JAK2-mediated signaling and thus negatively regulates the IFN-gamma signaling. The sequence is that of Protein MGF 505-7R from Ornithodoros (relapsing fever ticks).